Reading from the N-terminus, the 163-residue chain is uncharacterized protein (163 aa).

Positions 101–162 form a coiled coil; that stretch reads LESMKVERKP…KMGERILERE (62 aa).

This is an uncharacterized protein from Aquifex aeolicus (strain VF5).